We begin with the raw amino-acid sequence, 461 residues long: Serine--tRNA ligase (461 aa).

A disordered region spans residues 112-134 (EVPFGRDENDNREHHTFGEKPRF). A compositionally biased stretch (basic and acidic residues) spans 114 to 134 (PFGRDENDNREHHTFGEKPRF). 252 to 254 (TAE) contributes to the L-serine binding site. 283 to 285 (RAE) provides a ligand contact to ATP. Glu-306 is a binding site for L-serine. 370 to 373 (EISS) contacts ATP. Position 406 (Ser-406) interacts with L-serine.

Belongs to the class-II aminoacyl-tRNA synthetase family. Type-1 seryl-tRNA synthetase subfamily. As to quaternary structure, homodimer. The tRNA molecule binds across the dimer.

It localises to the cytoplasm. The enzyme catalyses tRNA(Ser) + L-serine + ATP = L-seryl-tRNA(Ser) + AMP + diphosphate + H(+). It carries out the reaction tRNA(Sec) + L-serine + ATP = L-seryl-tRNA(Sec) + AMP + diphosphate + H(+). The protein operates within aminoacyl-tRNA biosynthesis; selenocysteinyl-tRNA(Sec) biosynthesis; L-seryl-tRNA(Sec) from L-serine and tRNA(Sec): step 1/1. Functionally, catalyzes the attachment of serine to tRNA(Ser). Is also able to aminoacylate tRNA(Sec) with serine, to form the misacylated tRNA L-seryl-tRNA(Sec), which will be further converted into selenocysteinyl-tRNA(Sec). The protein is Serine--tRNA ligase of Methylocella silvestris (strain DSM 15510 / CIP 108128 / LMG 27833 / NCIMB 13906 / BL2).